The chain runs to 242 residues: Small ribosomal subunit protein uS2 (242 aa).

It belongs to the universal ribosomal protein uS2 family.

The protein is Small ribosomal subunit protein uS2 of Neisseria gonorrhoeae (strain ATCC 700825 / FA 1090).